Here is a 373-residue protein sequence, read N- to C-terminus: MYIPPSDPRRPAKVTAGQLCELCHARKALVKRPKNLQKVCKLCFFHVFETEIHNTIMENKLFQRGERVAVGASGGKDSTVLAYILKLLNERHDYGLEIVLLSIDEGIVGYRDDSLATVKRNQEQYGLPLKIVSYKDLYDWTMDEIVACAGMRNSCTYCGVFRRQALDRGAAMLDIHHVVTGHNADDMAETVLMNILRGDVARLEKSTAILTQSSGSPVKRSKPFKYAYQKEIVLYAHYKKLDYFSTECSYAPEAFRGTARELMKNLEAVRPSCIIDIIHSGEALRLRPRPKKRAPPPGSVEIRADGSASLFRNEGFVDGNRCERCGYLSSNRICKACMLLEGLEKNRARVQIADDTSTEGAARLTRTLEKLHF.

This sequence belongs to the TtcA family. CTU1/NCS6/ATPBD3 subfamily.

The protein resides in the cytoplasm. It participates in tRNA modification; 5-methoxycarbonylmethyl-2-thiouridine-tRNA biosynthesis. Functionally, plays a central role in 2-thiolation of mcm(5)S(2)U at tRNA wobble positions of tRNA(Lys), tRNA(Glu) and tRNA(Gln). Directly binds tRNAs and probably acts by catalyzing adenylation of tRNAs, an intermediate required for 2-thiolation. It is unclear whether it acts as a sulfurtransferase that transfers sulfur from thiocarboxylated URM1 onto the uridine of tRNAs at wobble position. Prior mcm(5) tRNA modification by the elongator complex is required for 2-thiolation. May also be involved in protein urmylation. This Eremothecium gossypii (strain ATCC 10895 / CBS 109.51 / FGSC 9923 / NRRL Y-1056) (Yeast) protein is Cytoplasmic tRNA 2-thiolation protein 1.